The chain runs to 153 residues: Ribosome maturation factor RimP (153 aa).

This sequence belongs to the RimP family.

It is found in the cytoplasm. Functionally, required for maturation of 30S ribosomal subunits. In Coxiella burnetii (strain CbuK_Q154) (Coxiella burnetii (strain Q154)), this protein is Ribosome maturation factor RimP.